A 359-amino-acid polypeptide reads, in one-letter code: Fe-S cluster assembly protein DRE2 (359 aa).

The N-terminal SAM-like domain stretch occupies residues 1-159; the sequence is MANILLLLHP…LFKKLSSNSN (159 aa). The disordered stretch occupies residues 152–187; sequence KKLSSNSNNNNNSSSPIGLTDSSAANTDEETDEANV. Positions 155–166 are enriched in low complexity; the sequence is SSNSNNNNNSSS. Positions 159–228 are linker; the sequence is NNNNNSSSPI…DDLIKDSNQL (70 aa). Residues 167–177 are compositionally biased toward polar residues; it reads PIGLTDSSAAN. [2Fe-2S] cluster-binding residues include Cys240, Cys252, Cys255, and Cys257. A fe-S binding site A region spans residues 240–257; that stretch reads CEIPNGKKRRKACKDCTC. [4Fe-4S] cluster contacts are provided by Cys322, Cys325, Cys333, and Cys336. Short sequence motifs (cx2C motif) lie at residues 322–325 and 333–336; these read CGSC and CDGC. Residues 322–336 form a fe-S binding site B region; the sequence is CGSCALGDAFRCDGC.

This sequence belongs to the anamorsin family. Monomer. Interacts with TAH18. Interacts with MIA40. It depends on [2Fe-2S] cluster as a cofactor. [4Fe-4S] cluster is required as a cofactor.

It is found in the cytoplasm. The protein resides in the mitochondrion intermembrane space. Its function is as follows. Component of the cytosolic iron-sulfur (Fe-S) protein assembly (CIA) machinery required for the maturation of extramitochondrial Fe-S proteins. Part of an electron transfer chain functioning in an early step of cytosolic Fe-S biogenesis, facilitating the de novo assembly of a [4Fe-4S] cluster on the scaffold complex CFD1-NBP35. Electrons are transferred to DRE2 from NADPH via the FAD- and FMN-containing protein TAH18. TAH18-DRE2 are also required for the assembly of the diferric tyrosyl radical cofactor of ribonucleotide reductase (RNR), probably by providing electrons for reduction during radical cofactor maturation in the catalytic small subunit RNR2. In Scheffersomyces stipitis (strain ATCC 58785 / CBS 6054 / NBRC 10063 / NRRL Y-11545) (Yeast), this protein is Fe-S cluster assembly protein DRE2.